The chain runs to 213 residues: Embryo-specific protein ATS3 (213 aa).

A signal peptide spans 1-21 (MTFPSLSVSFLFFAFIFVTHA). In terms of domain architecture, PLAT spans 34–148 (CPYTVVVMTS…LNTWYGHNNC (115 aa)). The disordered stretch occupies residues 147-188 (NCNTTGRPSSPDLPPPHFPPEFPPETPTTPPPPPPRPSAASR). N-linked (GlcNAc...) asparagine glycosylation occurs at asparagine 149. Residues 157–183 (PDLPPPHFPPEFPPETPTTPPPPPPRP) show a composition bias toward pro residues.

As to expression, expressed in seeds. Expression is restricted to the developing embryo.

The protein localises to the secreted. Its function is as follows. May play a role during embryo development. This chain is Embryo-specific protein ATS3, found in Arabidopsis thaliana (Mouse-ear cress).